An 813-amino-acid polypeptide reads, in one-letter code: Sodium/hydrogen exchanger 2 (813 aa).

7 consecutive transmembrane segments (helical) span residues 108–128, 139–159, 170–190, 210–230, 238–258, 279–299, and 309–329; these read IVPE…IIFG, TDVF…YFMP, IFWY…LSLF, LFGS…FENI, ILVF…YNLF, FFVV…IAAF, and VIEP…AEMF. An N-linked (GlcNAc...) asparagine glycan is attached at Asn-351. Transmembrane regions (helical) follow at residues 362 to 382, 393 to 413, 431 to 451, and 460 to 480; these read YFMK…MGVS, AFVC…VFVL, FIIA…FLLP, and LFIT…GITI. Residues 649–661 show a composition bias toward basic and acidic residues; the sequence is LRKDNSLNRERRA. 2 disordered regions span residues 649 to 709 and 736 to 813; these read LRKD…NLQP and DVGS…NEKP. The segment covering 687–696 has biased composition (polar residues); sequence VSNADGNSSD. 2 stretches are compositionally biased toward basic and acidic residues: residues 770-781 and 797-813; these read KDQRFGRGREDS and RASE…NEKP.

It belongs to the monovalent cation:proton antiporter 1 (CPA1) transporter (TC 2.A.36) family. Interacts with CHP1 and CHP2. As to expression, predominantly in small intestine, colon, and stomach, with much lower levels in skeletal muscle, kidney, brain, testis, uterus, heart and lung.

The protein resides in the apical cell membrane. The enzyme catalyses Na(+)(in) + H(+)(out) = Na(+)(out) + H(+)(in). Li(+) activates Na(+)/H(+) exchanger. Plasma membrane Na(+)/H(+) antiporter. Mediates the electroneutral exchange of intracellular H(+) ions for extracellular Na(+). Major apical Na(+)/H(+) exchanger in the base of the colonic crypt. Controls in the colonic crypt intracellular pH (pHi) to direct colonic epithelial cell differentiation into the absorptive enterocyte lineage at the expense of the secretory lineage. The sequence is that of Sodium/hydrogen exchanger 2 (Slc9a2) from Rattus norvegicus (Rat).